Here is a 599-residue protein sequence, read N- to C-terminus: Aspartate--tRNA(Asp/Asn) ligase (599 aa).

Residue glutamate 172 participates in L-aspartate binding. An aspartate region spans residues 196 to 199; that stretch reads QLFK. Arginine 218 provides a ligand contact to L-aspartate. ATP-binding positions include 218 to 220 and glutamine 227; that span reads RDE. An L-aspartate-binding site is contributed by histidine 451. Residue glutamate 485 coordinates ATP. Residue arginine 492 participates in L-aspartate binding. Position 537–540 (537–540) interacts with ATP; that stretch reads GLDR.

It belongs to the class-II aminoacyl-tRNA synthetase family. Type 1 subfamily. Homodimer.

The protein resides in the cytoplasm. It carries out the reaction tRNA(Asx) + L-aspartate + ATP = L-aspartyl-tRNA(Asx) + AMP + diphosphate. In terms of biological role, aspartyl-tRNA synthetase with relaxed tRNA specificity since it is able to aspartylate not only its cognate tRNA(Asp) but also tRNA(Asn). Reaction proceeds in two steps: L-aspartate is first activated by ATP to form Asp-AMP and then transferred to the acceptor end of tRNA(Asp/Asn). The chain is Aspartate--tRNA(Asp/Asn) ligase from Aromatoleum aromaticum (strain DSM 19018 / LMG 30748 / EbN1) (Azoarcus sp. (strain EbN1)).